The chain runs to 616 residues: Chaperone protein HscA (616 aa).

It belongs to the heat shock protein 70 family.

Its function is as follows. Chaperone involved in the maturation of iron-sulfur cluster-containing proteins. Has a low intrinsic ATPase activity which is markedly stimulated by HscB. Involved in the maturation of IscU. The sequence is that of Chaperone protein HscA from Klebsiella pneumoniae subsp. pneumoniae (strain ATCC 700721 / MGH 78578).